A 364-amino-acid chain; its full sequence is Trans-enoyl reductase ccsC (364 aa).

52-55 (CDYK) is an NADP(+) binding site. 141-148 (TGLATLGM) contributes to the substrate binding site. NADP(+) is bound by residues 176 to 179 (SSSV), 199 to 202 (SPRN), Tyr217, and 264 to 265 (LE). 284-288 (GPALL) is a substrate binding site. Position 353–354 (353–354 (VS)) interacts with NADP(+).

It belongs to the zinc-containing alcohol dehydrogenase family. Monomer.

It participates in mycotoxin biosynthesis. Functionally, trans-enoyl reductase; part of the gene cluster that mediates the biosynthesis of a family of the mycotoxins cytochalasins E and K. The hybrid PKS-NRPS synthetase ccsA and the enoyl reductase ccsC are responsible for fusion of phenylalanine with an octaketide backbone and subsequent release of the stable tetramic acid precursor. The polyketide synthase module (PKS) of the PKS-NRPS ccsA is responsible for the synthesis of the octaketide backbone. The downstream nonribosomal peptide synthetase (NRPS) amidates the carboxyl end of the octaketide with a phenylalanine. A reductase-like domain (R) at the C-terminus catalyzes the reductive release of the polyketide-amino acid intermediate. Because ccsA lacks a designated enoylreductase (ER) domain, the required activity is provided the enoyl reductase ccsC. Upon formation of the 11-membered carbocycle-fused perhydroisoindolone intermediate, a number of oxidative steps are required to afford the final cytochalasin E and K, including two hydroxylations at C17 and C18, one alcohol oxidation at C17, one epoxidation at C6 and C7 and two Baeyer-Villiger oxidations. The oxidative modification at C17, C18 and the C6-C7 epoxidation are likely to be catalyzed by the two cytochrome P450 oxygenases ccsD and ccsG. CcsD may be responsible for the epoxidation of the C6-C7 double bond. CcsG may be responsible for the successive oxidative modifications at C17 and C18. The double Baeyer-Villiger oxidations of ketocytochalasin to precytochalasin and cytochalasin Z(16) are among the final steps leading to cytochalasin E and K and are catalyzed by ccsB. The first oxygen insertion step follows that of the classic BVMO mechanism, generating the ester precytochalasin. Release of precytochalasin into an aqueous environment can generate the shunt product iso-precytochalasin through spontaneous isomerization. Alternatively, precytochalasin can undergo further oxidation by ccsB to yield the in-line carbonate-containing cytochalasin Z(16). Cytochalasin Z(16) is a precursor to cytochalasin E and cytochalasin K, whereas iso-precytochalasin is a precursor to cytochalasin Z(17) and rosellichalasin. The hydrolyase ccsE may catalyze hydrolysis of epoxide bond in cytochalasin E to afford cytochalasin K. The function of ccsF has not been assigned but it may play a role in post-PKS-NRPS biosynthetic step, resistance or transport of cytochalasins and related PKS-NRPS products. The polypeptide is Trans-enoyl reductase ccsC (Aspergillus clavatus (strain ATCC 1007 / CBS 513.65 / DSM 816 / NCTC 3887 / NRRL 1 / QM 1276 / 107)).